The primary structure comprises 358 residues: Ferredoxin--NADP reductase (358 aa).

Asp-38, Gln-46, Tyr-51, Val-91, Phe-126, Asp-301, and Thr-341 together coordinate FAD.

This sequence belongs to the ferredoxin--NADP reductase type 2 family. In terms of assembly, homodimer. Requires FAD as cofactor.

It catalyses the reaction 2 reduced [2Fe-2S]-[ferredoxin] + NADP(+) + H(+) = 2 oxidized [2Fe-2S]-[ferredoxin] + NADPH. This chain is Ferredoxin--NADP reductase, found in Paracidovorax citrulli (strain AAC00-1) (Acidovorax citrulli).